A 455-amino-acid polypeptide reads, in one-letter code: MASKCLKASFSSGSLKSPGKAGGGSTRVSNMYSSSSCKLPSPSRGARSFSVCSAGLGRGNYRVSSCLPALCLPTGGFATSYGTGGGWFGEGILTGNEKETMQSLNDRLASYLEKVRQLEQENASLESRIREWCEQQVPYMCPDYQSYFRTMEELQKKTLCSKAENARLVVQIDNAKLAADDFRTKYETEVSLRQLVEADINGLRRILDDLTLCKADLEAQVESLKEELLCLKKNHEEEVNSLRCQLGDRLNVEVDAAPPVDLNRVLDEMRCQYETLVENNRRDAEDWYDTQTEELNQQVVSSSEQLQSCQSDIIELRRTVNSLEIELQAQQSMRDALDSTLAETEGRYSSQLAQMQCMIGNVESQLGEIRADLERQNQEYQVLLDVRARLECEINTYRGLLESEDSKLPCNPCAPDYSSSKSCLPCLPAVSCSTGAARTTCSPRPVCVPCPGGRF.

Residues 1–97 (MASKCLKASF…FGEGILTGNE (97 aa)) form a head region. The 312-residue stretch at 97 to 408 (EKETMQSLND…GLLESEDSKL (312 aa)) folds into the IF rod domain. Positions 98–132 (KETMQSLNDRLASYLEKVRQLEQENASLESRIREW) are coil 1A. Residues 133–143 (CEQQVPYMCPD) form a linker 1 region. A coil 1B region spans residues 144–244 (YQSYFRTMEE…HEEEVNSLRC (101 aa)). A linker 12 region spans residues 245-260 (QLGDRLNVEVDAAPPV). Residues 261–404 (DLNRVLDEMR…NTYRGLLESE (144 aa)) are coil 2. Positions 405-455 (DSKLPCNPCAPDYSSSKSCLPCLPAVSCSTGAARTTCSPRPVCVPCPGGRF) are tail.

It belongs to the intermediate filament family.

The polypeptide is Keratin, type I cuticular Ha5 (Mus musculus (Mouse)).